The chain runs to 480 residues: Glutamyl-tRNA(Gln) amidotransferase subunit A (480 aa).

Active-site charge relay system residues include Lys74 and Ser149. Ser173 serves as the catalytic Acyl-ester intermediate.

It belongs to the amidase family. GatA subfamily. As to quaternary structure, heterotrimer of A, B and C subunits.

It catalyses the reaction L-glutamyl-tRNA(Gln) + L-glutamine + ATP + H2O = L-glutaminyl-tRNA(Gln) + L-glutamate + ADP + phosphate + H(+). Functionally, allows the formation of correctly charged Gln-tRNA(Gln) through the transamidation of misacylated Glu-tRNA(Gln) in organisms which lack glutaminyl-tRNA synthetase. The reaction takes place in the presence of glutamine and ATP through an activated gamma-phospho-Glu-tRNA(Gln). The polypeptide is Glutamyl-tRNA(Gln) amidotransferase subunit A (Ruthia magnifica subsp. Calyptogena magnifica).